We begin with the raw amino-acid sequence, 436 residues long: GTPase Der (436 aa).

EngA-type G domains are found at residues 4-167 (PVVA…PKRG) and 176-351 (IKFC…ENHA). Residues 10–17 (GRPNVGKS), 57–61 (DTGGI), 119–122 (NKID), 182–189 (GRPNVGKS), 229–233 (DTAGM), and 294–297 (NKWD) each bind GTP. A KH-like domain is found at 352–436 (MRVQTNVLNE…PIKIIARPRK (85 aa)).

It belongs to the TRAFAC class TrmE-Era-EngA-EngB-Septin-like GTPase superfamily. EngA (Der) GTPase family. As to quaternary structure, associates with the 50S ribosomal subunit.

In terms of biological role, GTPase that plays an essential role in the late steps of ribosome biogenesis. The chain is GTPase Der from Geobacillus sp. (strain WCH70).